The following is a 599-amino-acid chain: MKHIRNFSIIAHIDHGKSTLSDRLIQICGGLTEREMAAQVLDSMDLERERGITIKAQSVTLDYHAKDGETYQLNFIDTPGHVDFSYEVSRSLAACEGALLVVDAGQGVEAQTLANCYTAMEMDLEVVPVLNKIDLPAADPDRVSQEIEDIVGIDATDAVRCSAKTGVGVPDVLERLVRDIPPPEGDPEGPLQALIIDSWFDNYLGVVSLVRIKNGTMRKGEKIKVMSTGQIYNADRLGIFTPKREDTDVLNCGEVGWLVCAIKDILGAPVGDTLTLARHPAEKALPGFKKVKPQVYAGLFPISSDDYEAFRDALGKLSLNDASLFYEPESSTALGFGFRCGFLGLLHMEIIQERLEREYDLELITTAPTVVYEVQTTDGETVYVDSPGKLPPLNNIEELREPIAECHMLLPQEYLGNVITLCIEKRGVQTNMVYHGNQVALTYDIPMAEVVLDFFDRLKSTSRGYASLDYNFKRFTASDMVRVDVLINSERVDALALITHRDNSQYRGRELVEKMKDLIPRQQFDIAIQAAIGNHIIARSTVKQLRKNVLAKCYGGDVSRKKKLLQKQKDGKKRMKQVGNVELPQEAFLAILHVGKDSK.

Residues 2–184 (KHIRNFSIIA…RLVRDIPPPE (183 aa)) enclose the tr-type G domain. Residues 14–19 (DHGKST) and 131–134 (NKID) contribute to the GTP site.

It belongs to the TRAFAC class translation factor GTPase superfamily. Classic translation factor GTPase family. LepA subfamily.

Its subcellular location is the cell inner membrane. The catalysed reaction is GTP + H2O = GDP + phosphate + H(+). Functionally, required for accurate and efficient protein synthesis under certain stress conditions. May act as a fidelity factor of the translation reaction, by catalyzing a one-codon backward translocation of tRNAs on improperly translocated ribosomes. Back-translocation proceeds from a post-translocation (POST) complex to a pre-translocation (PRE) complex, thus giving elongation factor G a second chance to translocate the tRNAs correctly. Binds to ribosomes in a GTP-dependent manner. This chain is Elongation factor 4, found in Erwinia tasmaniensis (strain DSM 17950 / CFBP 7177 / CIP 109463 / NCPPB 4357 / Et1/99).